The following is a 249-amino-acid chain: DNA repair protein RecO (249 aa).

Belongs to the RecO family.

Its function is as follows. Involved in DNA repair and RecF pathway recombination. The sequence is that of DNA repair protein RecO from Lactobacillus delbrueckii subsp. bulgaricus (strain ATCC 11842 / DSM 20081 / BCRC 10696 / JCM 1002 / NBRC 13953 / NCIMB 11778 / NCTC 12712 / WDCM 00102 / Lb 14).